The primary structure comprises 252 residues: MAAAVAGSLVDKLVCLWRQPYTRIYLPHLFFCISLVGSVLKNAELVPESYFSSSRNVLNLYFVKVSWGWTIVLLLPFIAYSNFYIKSHMFALRRLTSLLVATLVWYICTETFFYIEDITGSCYESNTMVVIRGEFDTKAACRKAGFFWDGFDISGHSFILSYSSLVIMEEMVPMLHIQPAYRNPPLDCLYLALNVIVAIWIWMFGCTSVYFHDIIDKILGTSCGILGWYMTYKVWYVKLFSPGLPPQPKQHT.

Residues 1–25 lie on the Cytoplasmic side of the membrane; that stretch reads MAAAVAGSLVDKLVCLWRQPYTRIY. The helical transmembrane segment at 26–46 threads the bilayer; it reads LPHLFFCISLVGSVLKNAELV. Residues 47–59 are Lumenal-facing; it reads PESYFSSSRNVLN. A helical transmembrane segment spans residues 60-80; that stretch reads LYFVKVSWGWTIVLLLPFIAY. Topologically, residues 81–94 are cytoplasmic; that stretch reads SNFYIKSHMFALRR. A helical membrane pass occupies residues 95–115; it reads LTSLLVATLVWYICTETFFYI. The Lumenal segment spans residues 116–156; sequence EDITGSCYESNTMVVIRGEFDTKAACRKAGFFWDGFDISGH. His156 is an active-site residue. A helical membrane pass occupies residues 157–177; it reads SFILSYSSLVIMEEMVPMLHI. Over 178 to 190 the chain is Cytoplasmic; the sequence is QPAYRNPPLDCLY. The chain crosses the membrane as a helical span at residues 191 to 211; the sequence is LALNVIVAIWIWMFGCTSVYF. His212 is an active-site residue. The Lumenal portion of the chain corresponds to 212-223; sequence HDIIDKILGTSC. Residues 224 to 244 form a helical membrane-spanning segment; the sequence is GILGWYMTYKVWYVKLFSPGL. The Cytoplasmic segment spans residues 245–252; sequence PPQPKQHT.

This sequence belongs to the FIT family. FIT2 subfamily. In terms of tissue distribution, widely expressed.

The protein localises to the endoplasmic reticulum membrane. The catalysed reaction is an acyl-CoA + H2O = an acyl-4'-phosphopantetheine + adenosine 3',5'-bisphosphate + 2 H(+). Its function is as follows. Fatty acyl-coenzyme A (CoA) diphosphatase that hydrolyzes fatty acyl-CoA to yield acyl-4'-phosphopantetheine and adenosine 3',5'-bisphosphate. Preferentially hydrolyzes unsaturated long-chain acyl-CoA substrates in the endoplasmic reticulum (ER) lumen. This catalytic activity is required for maintaining ER structure and for lipid droplets (LDs) biogenesis, which are lipid storage organelles involved in maintaining lipid and energy homeostasis. Required for lipid droplet accumulation in liver and intestine during embryogenesis. May directly bind to diacylglycerol (DAGs) and triacylglycerol, which is also important for LD biogenesis. May support directional budding of nacent LDs from the ER into the cytosol by reducing DAG levels at sites of LD formation. May play a role in the regulation of cell morphology, ER morphology and cytoskeletal organization. The sequence is that of Acyl-coenzyme A diphosphatase FITM2 from Danio rerio (Zebrafish).